Consider the following 185-residue polypeptide: Small ribosomal subunit protein uS4c (185 aa).

The region spanning 72-134 (MRLDNVIFRL…PTSCNALKGE (63 aa)) is the S4 RNA-binding domain. The segment at 132–154 (KGESPGGGETPDHLTASLSEGSR) is disordered.

It belongs to the universal ribosomal protein uS4 family. As to quaternary structure, part of the 30S ribosomal subunit. Contacts protein S5. The interaction surface between S4 and S5 is involved in control of translational fidelity.

The protein localises to the plastid. Its subcellular location is the chloroplast. Its function is as follows. One of the primary rRNA binding proteins, it binds directly to 16S rRNA where it nucleates assembly of the body of the 30S subunit. With S5 and S12 plays an important role in translational accuracy. The polypeptide is Small ribosomal subunit protein uS4c (rps4) (Woodwardia unigemmata (Chainfern)).